The primary structure comprises 512 residues: Cobyric acid synthase (512 aa).

The GATase cobBQ-type domain maps to 251-451 (ALDIAVIRLP…IHGLFDSHHF (201 aa)). The Nucleophile role is filled by C332. H443 is a catalytic residue.

Belongs to the CobB/CobQ family. CobQ subfamily.

It participates in cofactor biosynthesis; adenosylcobalamin biosynthesis. Catalyzes amidations at positions B, D, E, and G on adenosylcobyrinic A,C-diamide. NH(2) groups are provided by glutamine, and one molecule of ATP is hydrogenolyzed for each amidation. The chain is Cobyric acid synthase from Yersinia enterocolitica serotype O:8 / biotype 1B (strain NCTC 13174 / 8081).